A 427-amino-acid polypeptide reads, in one-letter code: MLRRIFVSTFLVFGIVSLYAKDLEVSVRSEISLLPIHVELKIGPNDAKQQKYLRSLCNTFISDLALGDRLQPSSVKSEALSPPFSIAIVSRYPEIAFTIARGSQNHQQFHSLVLTEDISSNRQKIHEAADKIHYALTKVPGISSGKIVFSLSKNPQDGELKQGELWSVDYDGANLRALTQENSLSITPNWMNIGNCNPYLYVSYKYGIPKIFLGSLENTTGKKVLNLQGNQFMPTFSPRKKLLAFISDTYGNPDLFLQSFSLSKGVMGKPRRVLNETFGTQGNPSFSPDGSKLVFVSNRDGRPRLYIIQIDPEIQTPRLLTKKYRNSSCPSWSPDGKKIAFCSVIKGVRQICLYDLSTGKDYQLTTTPIDKEGPSWAIDSQHLVYSAGNSGESELYLLSLITQKTKKIVIGLGEKRFPSWGGFPNNQ.

Positions 1–20 (MLRRIFVSTFLVFGIVSLYA) are cleaved as a signal peptide.

The protein belongs to the TolB family.

Its subcellular location is the periplasm. The protein is Protein TolB homolog of Chlamydia caviae (strain ATCC VR-813 / DSM 19441 / 03DC25 / GPIC) (Chlamydophila caviae).